A 309-amino-acid polypeptide reads, in one-letter code: Heme-dependent oxidative N-demethylase beta subunit (309 aa).

An FAD-binding FR-type domain is found at 2 to 103 (STLLDVRVAA…SPPANLFPLH (102 aa)). The 2Fe-2S ferredoxin-type domain maps to 226-309 (FRVELARSGQ…GCGSPILLDL (84 aa)). [2Fe-2S] cluster contacts are provided by Cys-260, Cys-265, Cys-268, and Cys-296.

Belongs to the PDR/VanB family. As to quaternary structure, the heme-dependent oxidative N-demethylase (HODM) is a heterotetramer composed of a catalytic alpha subunit, a FMN/2Fe-2S-dependent oxidoreductase beta subunit, a gamma subunit with putative aminotransferase activity, and a delta subunit of unknown function. [2Fe-2S] cluster is required as a cofactor. Requires FMN as cofactor.

In terms of biological role, component of the heme-dependent oxidative N-demethylase (HODM) enzyme, that catalyzes the NADPH-dependent oxidation of dimethylamine (DMA) to methylamine (MA) and formaldehyde. Functions in bacterial methylated amine catabolism, linking alkylamine oxidation to the tetrahydrofolate C1 pool. The beta subunit of HODM binds FMN and a 2Fe-2S cluster, and likely reduces the ferric heme iron of the alpha subunit to ferrous using NADPH. This Ectopseudomonas mendocina (strain ymp) (Pseudomonas mendocina) protein is Heme-dependent oxidative N-demethylase beta subunit.